The following is a 448-amino-acid chain: Adenylosuccinate synthetase (448 aa).

Residues 36–42 (GDEGKGK) and 64–66 (GHT) contribute to the GTP site. The Proton acceptor role is filled by Asp-37. Asp-37 and Gly-64 together coordinate Mg(2+). IMP-binding positions include 37–40 (DEGK), 62–65 (NAGH), Thr-154, Arg-168, Asn-246, Thr-261, and Arg-325. The active-site Proton donor is the His-65. 321 to 327 (VTTKRKR) serves as a coordination point for substrate. GTP is bound by residues Arg-327, 353 to 355 (KLD), and 436 to 438 (GVG).

It belongs to the adenylosuccinate synthetase family. As to quaternary structure, homodimer. Mg(2+) serves as cofactor.

The protein localises to the cytoplasm. The catalysed reaction is IMP + L-aspartate + GTP = N(6)-(1,2-dicarboxyethyl)-AMP + GDP + phosphate + 2 H(+). The protein operates within purine metabolism; AMP biosynthesis via de novo pathway; AMP from IMP: step 1/2. In terms of biological role, plays an important role in the de novo pathway and in the salvage pathway of purine nucleotide biosynthesis. Catalyzes the first committed step in the biosynthesis of AMP from IMP. In Drosophila ananassae (Fruit fly), this protein is Adenylosuccinate synthetase.